Here is a 709-residue protein sequence, read N- to C-terminus: Polyribonucleotide nucleotidyltransferase (709 aa).

Residues Asp482 and Asp488 each contribute to the Mg(2+) site. Residues 549-608 (PRIITMSIDPDKIREVIGPGGKVINKIIAETGVKIDIEDDGRIFIAATDTEAANKAVRII) enclose the KH domain. Residues 618-686 (GKVYTGKVTR…KQGRINLSRK (69 aa)) enclose the S1 motif domain.

The protein belongs to the polyribonucleotide nucleotidyltransferase family. Mg(2+) serves as cofactor.

It is found in the cytoplasm. It catalyses the reaction RNA(n+1) + phosphate = RNA(n) + a ribonucleoside 5'-diphosphate. Its function is as follows. Involved in mRNA degradation. Catalyzes the phosphorolysis of single-stranded polyribonucleotides processively in the 3'- to 5'-direction. The protein is Polyribonucleotide nucleotidyltransferase of Heliobacterium modesticaldum (strain ATCC 51547 / Ice1).